The sequence spans 121 residues: Large ribosomal subunit protein bL12 (121 aa).

The protein belongs to the bacterial ribosomal protein bL12 family. In terms of assembly, homodimer. Part of the ribosomal stalk of the 50S ribosomal subunit. Forms a multimeric L10(L12)X complex, where L10 forms an elongated spine to which 2 to 4 L12 dimers bind in a sequential fashion. Binds GTP-bound translation factors.

Functionally, forms part of the ribosomal stalk which helps the ribosome interact with GTP-bound translation factors. Is thus essential for accurate translation. This Shewanella piezotolerans (strain WP3 / JCM 13877) protein is Large ribosomal subunit protein bL12.